The chain runs to 337 residues: Ketol-acid reductoisomerase (NADP(+)) (337 aa).

The 183-residue stretch at 1 to 183 folds into the KARI N-terminal Rossmann domain; that stretch reads MAIETLYDSD…GGARAGVIPT (183 aa). NADP(+)-binding positions include 26-29, Arg49, Ser52, Ser54, and 84-87; these read YGSQ and DTSQ. His109 is a catalytic residue. Gly135 is a binding site for NADP(+). Residues 184-329 form the KARI C-terminal knotted domain; it reads TFKDETETDL…SQLRDLMSWV (146 aa). The Mg(2+) site is built by Asp192, Glu196, Glu228, and Glu232. Ser253 is a substrate binding site.

This sequence belongs to the ketol-acid reductoisomerase family. Mg(2+) serves as cofactor.

It carries out the reaction (2R)-2,3-dihydroxy-3-methylbutanoate + NADP(+) = (2S)-2-acetolactate + NADPH + H(+). It catalyses the reaction (2R,3R)-2,3-dihydroxy-3-methylpentanoate + NADP(+) = (S)-2-ethyl-2-hydroxy-3-oxobutanoate + NADPH + H(+). The protein operates within amino-acid biosynthesis; L-isoleucine biosynthesis; L-isoleucine from 2-oxobutanoate: step 2/4. Its pathway is amino-acid biosynthesis; L-valine biosynthesis; L-valine from pyruvate: step 2/4. Functionally, involved in the biosynthesis of branched-chain amino acids (BCAA). Catalyzes an alkyl-migration followed by a ketol-acid reduction of (S)-2-acetolactate (S2AL) to yield (R)-2,3-dihydroxy-isovalerate. In the isomerase reaction, S2AL is rearranged via a Mg-dependent methyl migration to produce 3-hydroxy-3-methyl-2-ketobutyrate (HMKB). In the reductase reaction, this 2-ketoacid undergoes a metal-dependent reduction by NADPH to yield (R)-2,3-dihydroxy-isovalerate. This chain is Ketol-acid reductoisomerase (NADP(+)), found in Corynebacterium aurimucosum (strain ATCC 700975 / DSM 44827 / CIP 107346 / CN-1) (Corynebacterium nigricans).